The following is a 205-amino-acid chain: High frequency lysogenization protein HflD homolog (205 aa).

The protein belongs to the HflD family.

It is found in the cytoplasm. It localises to the cell inner membrane. The sequence is that of High frequency lysogenization protein HflD homolog from Shewanella sp. (strain MR-7).